Here is a 626-residue protein sequence, read N- to C-terminus: Polyphenol oxidase C, chloroplastic (626 aa).

The transit peptide at 1–83 (MASLCSNSST…ANAIPLAASA (83 aa)) directs the protein to the chloroplast. 2 cysteine pairs are disulfide-bonded: Cys-94–Cys-110 and Cys-109–Cys-177. Cu cation is bound by residues His-176, His-194, His-203, His-324, His-328, and His-366. The segment at residues 180-194 (CNGGYSIDGKVLQVH) is a cross-link (2'-(S-cysteinyl)-histidine (Cys-His)).

This sequence belongs to the tyrosinase family. The cofactor is Cu(2+).

The protein localises to the plastid. The protein resides in the chloroplast thylakoid lumen. It catalyses the reaction 2 catechol + O2 = 2 1,2-benzoquinone + 2 H2O. In terms of biological role, catalyzes the oxidation of mono- and o-diphenols to o-diquinones. In Solanum lycopersicum (Tomato), this protein is Polyphenol oxidase C, chloroplastic.